The primary structure comprises 385 residues: Glycerol-3-phosphate dehydrogenase [NAD(+)] 1 (385 aa).

Residues 29–34 (GSGNWG), Phe-121, Lys-144, and Ala-177 contribute to the NAD(+) site. A substrate-binding site is contributed by Lys-144. The active-site Proton acceptor is Lys-232. The NAD(+) site is built by Arg-296 and Gln-325. Residue 296–297 (RN) participates in substrate binding. Residue Ser-376 is modified to Phosphoserine. Thr-382 carries the phosphothreonine modification.

Belongs to the NAD-dependent glycerol-3-phosphate dehydrogenase family.

It is found in the cytoplasm. It catalyses the reaction sn-glycerol 3-phosphate + NAD(+) = dihydroxyacetone phosphate + NADH + H(+). The sequence is that of Glycerol-3-phosphate dehydrogenase [NAD(+)] 1 (gpd1) from Schizosaccharomyces pombe (strain 972 / ATCC 24843) (Fission yeast).